Reading from the N-terminus, the 304-residue chain is Recombination-associated protein RdgC (304 aa).

Belongs to the RdgC family.

It is found in the cytoplasm. The protein localises to the nucleoid. In terms of biological role, may be involved in recombination. The sequence is that of Recombination-associated protein RdgC from Shewanella oneidensis (strain ATCC 700550 / JCM 31522 / CIP 106686 / LMG 19005 / NCIMB 14063 / MR-1).